Here is a 328-residue protein sequence, read N- to C-terminus: Fe(3+) ions import ATP-binding protein FbpC 1 (328 aa).

The region spanning 7 to 237 (LVLKNITKAF…PNSLFLANFM (231 aa)) is the ABC transporter domain. 39–46 (GPSGCGKT) contributes to the ATP binding site.

This sequence belongs to the ABC transporter superfamily. Fe(3+) ion importer (TC 3.A.1.10) family. The complex is composed of two ATP-binding proteins (FbpC), two transmembrane proteins (FbpB) and a solute-binding protein (FbpA).

It localises to the cell inner membrane. It catalyses the reaction Fe(3+)(out) + ATP + H2O = Fe(3+)(in) + ADP + phosphate + H(+). Its function is as follows. Part of the ABC transporter complex FbpABC involved in Fe(3+) ions import. Responsible for energy coupling to the transport system. The protein is Fe(3+) ions import ATP-binding protein FbpC 1 of Haemophilus influenzae (strain ATCC 51907 / DSM 11121 / KW20 / Rd).